Consider the following 157-residue polypeptide: Probable succinate transporter subunit YjjB (157 aa).

4 helical membrane-spanning segments follow: residues 8–28, 50–70, 87–107, and 129–149; these read FALA…AMVF, MILM…SMLV, VFTV…TAMI, and FLTA…PGLW.

It belongs to the ThrE exporter (TC 2.A.79) family. The transporter is composed of YjjB and YjjP.

The protein localises to the cell inner membrane. In terms of biological role, involved in succinate export with YjjP. Both proteins are required for export. The sequence is that of Probable succinate transporter subunit YjjB from Escherichia coli (strain SE11).